Here is a 227-residue protein sequence, read N- to C-terminus: E3 ubiquitin-protein ligase ZNRF1 (227 aa).

The disordered stretch occupies residues M1–G42. The N-myristoyl glycine moiety is linked to residue G2. Residues G2 to R10 form a required for endosomal and lysosomal localization and myristoylation region. Residues S50, S52, and S53 each carry the phosphoserine modification. The interval G65–E105 is disordered. Y103 is subject to Phosphotyrosine. S123 carries the phosphoserine modification. An RING-type; atypical zinc finger spans residues C184 to P225.

As to quaternary structure, interacts with AKT1, GLUL and TUBB2A. Interacts with ZNRF2. Interacts (via its RING domain) with UBE2N. Interacts (when phosphorylated) with YWHAE. Post-translationally, N-myristoylation targets ZNRF1 to intracellular membranes. Phosphorylated by SRC at Tyr-103; leading to 'Lys-63'-linked ubiquitination of TLR3, lysosomal trafficking and degradation.

Its subcellular location is the endosome. It is found in the lysosome. The protein resides in the membrane. The protein localises to the cytoplasmic vesicle. It localises to the secretory vesicle. Its subcellular location is the synaptic vesicle membrane. The catalysed reaction is S-ubiquitinyl-[E2 ubiquitin-conjugating enzyme]-L-cysteine + [acceptor protein]-L-lysine = [E2 ubiquitin-conjugating enzyme]-L-cysteine + N(6)-ubiquitinyl-[acceptor protein]-L-lysine.. It functions in the pathway protein modification; protein ubiquitination. Its function is as follows. E3 ubiquitin-protein ligase that plays a role in different processes including cell differentiation, receptor recycling or regulation of inflammation. Mediates the ubiquitination of AKT1 and GLUL, thereby playing a role in neuron cells differentiation. Plays a role in the establishment and maintenance of neuronal transmission and plasticity. Regulates Schwann cells differentiation by mediating ubiquitination of GLUL. Promotes neurodegeneration by mediating 'Lys-48'-linked polyubiquitination and subsequent degradation of AKT1 in axons: degradation of AKT1 prevents AKT1-mediated phosphorylation of GSK3B, leading to GSK3B activation and phosphorylation of DPYSL2/CRMP2 followed by destabilization of microtubule assembly in axons. Ubiquitinates the Na(+)/K(+) ATPase alpha-1 subunit/ATP1A1 and thereby influences its endocytosis and/or degradation. Controls ligand-induced EGFR signaling via mediating receptor ubiquitination and recruitment of the ESCRT machinery. Acts as a negative feedback mechanism controlling TLR3 trafficking by mediating TLR3 'Lys-63'-linked polyubiquitination to reduce type I IFN production. Modulates inflammation by promoting caveolin-1/CAV1 ubiquitination and degradation to regulate TLR4-activated immune response. The polypeptide is E3 ubiquitin-protein ligase ZNRF1 (Znrf1) (Mus musculus (Mouse)).